A 554-amino-acid chain; its full sequence is 3-(3-hydroxy-phenyl)propionate/3-hydroxycinnamic acid hydroxylase (554 aa).

FAD is bound by residues glutamine 17–lysine 46 and phenylalanine 285–aspartate 295.

Belongs to the PheA/TfdB FAD monooxygenase family. It depends on FAD as a cofactor.

It catalyses the reaction 3-(3-hydroxyphenyl)propanoate + NADH + O2 + H(+) = 3-(2,3-dihydroxyphenyl)propanoate + NAD(+) + H2O. The catalysed reaction is (2E)-3-(3-hydroxyphenyl)prop-2-enoate + NADH + O2 + H(+) = (2E)-3-(2,3-dihydroxyphenyl)prop-2-enoate + NAD(+) + H2O. It participates in aromatic compound metabolism; 3-phenylpropanoate degradation. Catalyzes the insertion of one atom of molecular oxygen into position 2 of the phenyl ring of 3-(3-hydroxyphenyl)propionate (3-HPP) and hydroxycinnamic acid (3HCI). This chain is 3-(3-hydroxy-phenyl)propionate/3-hydroxycinnamic acid hydroxylase, found in Escherichia coli O139:H28 (strain E24377A / ETEC).